Reading from the N-terminus, the 116-residue chain is NADH-ubiquinone oxidoreductase chain 3 (116 aa).

The next 3 helical transmembrane spans lie at 10 to 30 (FLTL…TFAA), 64 to 84 (FFLV…LFPL), and 88 to 108 (VFFH…FEWV).

It belongs to the complex I subunit 3 family.

It is found in the mitochondrion membrane. It catalyses the reaction a ubiquinone + NADH + 5 H(+)(in) = a ubiquinol + NAD(+) + 4 H(+)(out). Its function is as follows. Core subunit of the mitochondrial membrane respiratory chain NADH dehydrogenase (Complex I) that is believed to belong to the minimal assembly required for catalysis. Complex I functions in the transfer of electrons from NADH to the respiratory chain. The immediate electron acceptor for the enzyme is believed to be ubiquinone. The sequence is that of NADH-ubiquinone oxidoreductase chain 3 (ND3) from Patiria pectinifera (Starfish).